We begin with the raw amino-acid sequence, 247 residues long: Uridylate kinase (247 aa).

Residue 18-21 (KLSG) participates in ATP binding. G60 provides a ligand contact to UMP. ATP contacts are provided by G61 and R65. Residues D80 and 141 to 148 (TGNPFFTT) each bind UMP. The ATP site is built by T168, Y174, and D177.

This sequence belongs to the UMP kinase family. In terms of assembly, homohexamer.

The protein localises to the cytoplasm. The catalysed reaction is UMP + ATP = UDP + ADP. The protein operates within pyrimidine metabolism; CTP biosynthesis via de novo pathway; UDP from UMP (UMPK route): step 1/1. With respect to regulation, inhibited by UTP. Functionally, catalyzes the reversible phosphorylation of UMP to UDP. This is Uridylate kinase from Stutzerimonas stutzeri (strain A1501) (Pseudomonas stutzeri).